A 207-amino-acid polypeptide reads, in one-letter code: ATP phosphoribosyltransferase (207 aa).

This sequence belongs to the ATP phosphoribosyltransferase family. Short subfamily. Heteromultimer composed of HisG and HisZ subunits.

The protein localises to the cytoplasm. It catalyses the reaction 1-(5-phospho-beta-D-ribosyl)-ATP + diphosphate = 5-phospho-alpha-D-ribose 1-diphosphate + ATP. It functions in the pathway amino-acid biosynthesis; L-histidine biosynthesis; L-histidine from 5-phospho-alpha-D-ribose 1-diphosphate: step 1/9. Functionally, catalyzes the condensation of ATP and 5-phosphoribose 1-diphosphate to form N'-(5'-phosphoribosyl)-ATP (PR-ATP). Has a crucial role in the pathway because the rate of histidine biosynthesis seems to be controlled primarily by regulation of HisG enzymatic activity. The sequence is that of ATP phosphoribosyltransferase from Geobacillus kaustophilus (strain HTA426).